The chain runs to 509 residues: Maturase K (509 aa).

This sequence belongs to the intron maturase 2 family. MatK subfamily.

The protein resides in the plastid. It localises to the chloroplast. Functionally, usually encoded in the trnK tRNA gene intron. Probably assists in splicing its own and other chloroplast group II introns. This is Maturase K from Pereskia aculeata (Barbados gooseberry).